Here is a 35-residue protein sequence, read N- to C-terminus: Conotoxin Cal6.1f (35 aa).

The propeptide occupies 1 to 8; that stretch reads GLIRPSKR. Disulfide bonds link Cys-9-Cys-25, Cys-16-Cys-29, and Cys-24-Cys-34.

Belongs to the conotoxin O1 superfamily. In terms of tissue distribution, expressed by the venom duct.

It localises to the secreted. Functionally, probable neurotoxin with unknown target. Possibly targets ion channels. This is Conotoxin Cal6.1f from Californiconus californicus (California cone).